The chain runs to 89 residues: MKQYIFFLALIVLTATFAEAGKKTEILDKVKKVFSKAKDKVLAGVEDLNNMSELGCPFIDKWCEDHCDSKKLVGKCENFDCSCVKLGGK.

An N-terminal signal peptide occupies residues 1–20; that stretch reads MKQYIFFLALIVLTATFAEA. The propeptide occupies 21 to 39; it reads GKKTEILDKVKKVFSKAKD. Residues 53–89 form the BetaSPN-type CS-alpha/beta domain; it reads ELGCPFIDKWCEDHCDSKKLVGKCENFDCSCVKLGGK. 3 disulfides stabilise this stretch: C56–C76, C63–C81, and C67–C83.

Belongs to the long chain scorpion toxin family. Class 2 subfamily. As to expression, expressed by the venom gland.

The protein resides in the secreted. Inhibits voltage-gated potassium channel. This is Neurotoxin beta-KTx 52.1 from Lychas mucronatus (Chinese swimming scorpion).